Here is a 139-residue protein sequence, read N- to C-terminus: Cofilin (139 aa).

The ADF-H domain maps to 4–135 (GVKVSQECLD…SYDTVLDKVS (132 aa)).

This sequence belongs to the actin-binding proteins ADF family.

It is found in the cytoplasm. The protein localises to the cytoskeleton. It localises to the nucleus matrix. Functionally, controls reversibly actin polymerization and depolymerization in a pH-sensitive manner. It has the ability to bind G- and F-actin in a 1:1 ratio of cofilin to actin. Binding to F-actin is regulated by tropomyosin. It is the major component of intranuclear and cytoplasmic actin rods. Required for accumulation of actin at the cell division site via depolymerizing actin at the cell ends. In association with myosin II has a role in the assembly of the contractile ring via severing actin filaments. Involved in the maintenance of the contractile ring once formed. In association with profilin and capping protein, has a role in the mitotic reorganization of the actin cytoskeleton. In Mycosarcoma maydis (Corn smut fungus), this protein is Cofilin (COF1).